We begin with the raw amino-acid sequence, 211 residues long: ATP phosphoribosyltransferase (211 aa).

The protein belongs to the ATP phosphoribosyltransferase family. Short subfamily. As to quaternary structure, heteromultimer composed of HisG and HisZ subunits.

The protein localises to the cytoplasm. It carries out the reaction 1-(5-phospho-beta-D-ribosyl)-ATP + diphosphate = 5-phospho-alpha-D-ribose 1-diphosphate + ATP. It participates in amino-acid biosynthesis; L-histidine biosynthesis; L-histidine from 5-phospho-alpha-D-ribose 1-diphosphate: step 1/9. In terms of biological role, catalyzes the condensation of ATP and 5-phosphoribose 1-diphosphate to form N'-(5'-phosphoribosyl)-ATP (PR-ATP). Has a crucial role in the pathway because the rate of histidine biosynthesis seems to be controlled primarily by regulation of HisG enzymatic activity. The sequence is that of ATP phosphoribosyltransferase from Pseudomonas fluorescens (strain Pf0-1).